The chain runs to 300 residues: Formylmethanofuran--tetrahydromethanopterin formyltransferase-like protein (300 aa).

Belongs to the FTR family.

The protein is Formylmethanofuran--tetrahydromethanopterin formyltransferase-like protein of Methanopyrus kandleri (strain AV19 / DSM 6324 / JCM 9639 / NBRC 100938).